The following is a 399-amino-acid chain: Acetylornithine aminotransferase (399 aa).

Pyridoxal 5'-phosphate contacts are provided by residues 99–100 (GA) and phenylalanine 132. Arginine 135 is a binding site for N(2)-acetyl-L-ornithine. Pyridoxal 5'-phosphate is bound at residue 217–220 (DEVQ). An N6-(pyridoxal phosphate)lysine modification is found at lysine 246. Threonine 274 contributes to the N(2)-acetyl-L-ornithine binding site. Threonine 275 is a binding site for pyridoxal 5'-phosphate.

The protein belongs to the class-III pyridoxal-phosphate-dependent aminotransferase family. ArgD subfamily. Homodimer. Pyridoxal 5'-phosphate is required as a cofactor.

The protein localises to the cytoplasm. It carries out the reaction N(2)-acetyl-L-ornithine + 2-oxoglutarate = N-acetyl-L-glutamate 5-semialdehyde + L-glutamate. Its pathway is amino-acid biosynthesis; L-arginine biosynthesis; N(2)-acetyl-L-ornithine from L-glutamate: step 4/4. This is Acetylornithine aminotransferase from Agrobacterium fabrum (strain C58 / ATCC 33970) (Agrobacterium tumefaciens (strain C58)).